We begin with the raw amino-acid sequence, 1907 residues long: Receptor-type tyrosine-protein phosphatase S (1907 aa).

A signal peptide spans 1-29 (MAPTWRPSVVSVVGPVGLFLVLLARGCLA). The Extracellular segment spans residues 30–1257 (EEPPRFIREP…PQPIVDGEEG (1228 aa)). 3 Ig-like C2-type domains span residues 33-123 (PRFI…AKLT), 135-224 (PNID…ANLY), and 232-314 (PRFS…AQIT). Intrachain disulfides connect cysteine 54–cysteine 107 and cysteine 156–cysteine 207. The segment at 68-72 (KKGKK) is important for binding to glycosaminoglycan chains. N-linked (GlcNAc...) asparagine glycans are attached at residues asparagine 250 and asparagine 295. Cysteine 253 and cysteine 298 are oxidised to a cystine. Fibronectin type-III domains lie at 321–411 (APGT…TGEQ), 416–510 (APRN…TQQG), 514–603 (QPMN…TLQA), 608–705 (PPQD…TDED), 710–809 (PPRK…TKGA), 810–906 (VLGR…APRG), 907–1008 (FPQI…LARD), and 1011–1095 (SPKN…TAFN). The segment covering 691–700 (PGPESSPVVV) has biased composition (low complexity). A disordered region spans residues 691 to 711 (PGPESSPVVVRTDEDVPSAPP). An N-linked (GlcNAc...) asparagine glycan is attached at asparagine 720. Asparagine 916 carries N-linked (GlcNAc...) asparagine glycosylation. The chain crosses the membrane as a helical span at residues 1258–1278 (LIWVIGPVLAVVFIICIVIAI). Over 1279-1907 (LLYKNKPDSK…YLGSFDHYAT (629 aa)) the chain is Cytoplasmic. Basic and acidic residues predominate over residues 1286-1296 (DSKRKDSEPRT). Positions 1286-1313 (DSKRKDSEPRTKCLLNNADLAPHHPKDP) are disordered. Tyrosine-protein phosphatase domains are found at residues 1352–1607 (LSQE…LLEA) and 1639–1898 (MELE…ALEY). Residues aspartate 1516, 1548–1554 (CSAGVGR), and glutamine 1592 contribute to the substrate site. Cysteine 1548 acts as the Phosphocysteine intermediate in catalysis. Cysteine 1839 acts as the Phosphocysteine intermediate in catalysis.

Belongs to the protein-tyrosine phosphatase family. Receptor class 2A subfamily. In terms of assembly, binding to large heparan sulfate proteoglycan structures promotes oligomerization. Binding to chondroitin sulfate proteoglycan does not lead to oligomerization. Interacts (via Ig-like domains) with NTRK1 and NTRK3, but does not form detectable complexes with NTRK2. Interacts with PPFIA1, PPFIA2 and PPFIA3. Post-translationally, a cleavage occurs, separating the extracellular domain from the transmembrane segment. This process called 'ectodomain shedding' is thought to be involved in receptor desensitization, signal transduction and/or membrane localization. Detected in brain neocortex (at protein level). Detected in heart, testis and liver. Detected at lower levels in skeletal muscle, brain, spleen and kidney.

Its subcellular location is the cell membrane. The protein localises to the cell projection. The protein resides in the axon. It localises to the perikaryon. It is found in the cytoplasmic vesicle. Its subcellular location is the secretory vesicle. The protein localises to the synaptic vesicle membrane. The protein resides in the synapse. It localises to the synaptosome. It is found in the postsynaptic density. Its subcellular location is the neuron projection. The protein localises to the growth cone. It carries out the reaction O-phospho-L-tyrosyl-[protein] + H2O = L-tyrosyl-[protein] + phosphate. In terms of biological role, cell surface receptor that binds to glycosaminoglycans, including chondroitin sulfate proteoglycans and heparan sulfate proteoglycans. Binding to chondroitin sulfate and heparan sulfate proteoglycans has opposite effects on PTPRS oligomerization and regulation of neurite outgrowth. Contributes to the inhibition of neurite and axonal outgrowth by chondroitin sulfate proteoglycans, also after nerve transection. Plays a role in stimulating neurite outgrowth in response to the heparan sulfate proteoglycan GPC2. Required for normal brain development, especially for normal development of the pituitary gland and the olfactory bulb. Functions as tyrosine phosphatase. Mediates dephosphorylation of NTRK1, NTRK2 and NTRK3. Plays a role in down-regulation of signaling cascades that lead to the activation of Akt and MAP kinases. Down-regulates TLR9-mediated activation of NF-kappa-B, as well as production of TNF, interferon alpha and interferon beta. This is Receptor-type tyrosine-protein phosphatase S (Ptprs) from Rattus norvegicus (Rat).